The primary structure comprises 378 residues: mRNA cap guanine-N(7) methyltransferase (378 aa).

The 308-residue stretch at 24 to 331 folds into the mRNA cap 0 methyltransferase domain; the sequence is SRIFFMRNMN…MYLVFGFRKK (308 aa). 33-34 serves as a coordination point for mRNA; the sequence is NN. Residues Lys37, Ala62, Asp84, Asp116, Gln138, and Tyr143 each coordinate S-adenosyl-L-methionine. 2 stretches are compositionally biased toward basic and acidic residues: residues 335 to 347 and 356 to 378; these read EKNL…EIKK and DTDK…PSHC. The segment at 335–378 is disordered; the sequence is EKNLESEAPEIKKVTPVPLNEDTDKTAEKNEERIEEKEENPSHC.

Belongs to the class I-like SAM-binding methyltransferase superfamily. mRNA cap 0 methyltransferase family.

It localises to the nucleus. The enzyme catalyses a 5'-end (5'-triphosphoguanosine)-ribonucleoside in mRNA + S-adenosyl-L-methionine = a 5'-end (N(7)-methyl 5'-triphosphoguanosine)-ribonucleoside in mRNA + S-adenosyl-L-homocysteine. In terms of biological role, mRNA-capping methyltransferase that methylates the N7 position of the added guanosine to the 5'-cap structure of mRNAs. Binds RNA containing 5'-terminal GpppC. This is mRNA cap guanine-N(7) methyltransferase from Caenorhabditis briggsae.